The chain runs to 246 residues: Probable transcriptional regulatory protein ASA_2843 (246 aa).

The protein belongs to the TACO1 family.

The protein localises to the cytoplasm. This chain is Probable transcriptional regulatory protein ASA_2843, found in Aeromonas salmonicida (strain A449).